A 140-amino-acid chain; its full sequence is MMDVEQVKEIIPHRYPFLLVDKVVEIQEGEKVTALKNVSVNEPFFQGHFPEYPVMPGVLILEALAQTGAIAVLNIEENKGKIGFLAGVDKCRFKRQVKPGDQLNLQVEIIRMKGPIGKGKGIATVDGEVACEAEITFAIK.

Residue His-48 is part of the active site.

This sequence belongs to the thioester dehydratase family. FabZ subfamily.

The protein localises to the cytoplasm. It carries out the reaction a (3R)-hydroxyacyl-[ACP] = a (2E)-enoyl-[ACP] + H2O. Involved in unsaturated fatty acids biosynthesis. Catalyzes the dehydration of short chain beta-hydroxyacyl-ACPs and long chain saturated and unsaturated beta-hydroxyacyl-ACPs. This Oceanobacillus iheyensis (strain DSM 14371 / CIP 107618 / JCM 11309 / KCTC 3954 / HTE831) protein is 3-hydroxyacyl-[acyl-carrier-protein] dehydratase FabZ.